A 113-amino-acid polypeptide reads, in one-letter code: uncharacterized protein (113 aa).

To H.pylori HP0245/JHP0230.

This is an uncharacterized protein from Campylobacter jejuni subsp. jejuni serotype O:2 (strain ATCC 700819 / NCTC 11168).